The chain runs to 39 residues: Photosystem II reaction center protein L (39 aa).

Residues 16–37 (RTSLYLGLLLVAVLGILFSSYF) form a helical membrane-spanning segment.

The protein belongs to the PsbL family. In terms of assembly, PSII is composed of 1 copy each of membrane proteins PsbA, PsbB, PsbC, PsbD, PsbE, PsbF, PsbH, PsbI, PsbJ, PsbK, PsbL, PsbM, PsbT, PsbX, PsbY, PsbZ, Psb30/Ycf12, peripheral proteins PsbO, CyanoQ (PsbQ), PsbU, PsbV and a large number of cofactors. It forms dimeric complexes.

It localises to the cellular thylakoid membrane. In terms of biological role, one of the components of the core complex of photosystem II (PSII). PSII is a light-driven water:plastoquinone oxidoreductase that uses light energy to abstract electrons from H(2)O, generating O(2) and a proton gradient subsequently used for ATP formation. It consists of a core antenna complex that captures photons, and an electron transfer chain that converts photonic excitation into a charge separation. This subunit is found at the monomer-monomer interface and is required for correct PSII assembly and/or dimerization. Required for PSII activity, at least in part due to its effects on PSII assembly. May make specific contact(s) with lipids. The polypeptide is Photosystem II reaction center protein L (Synechocystis sp. (strain ATCC 27184 / PCC 6803 / Kazusa)).